The sequence spans 150 residues: 3-hydroxyacyl-[acyl-carrier-protein] dehydratase FabZ (150 aa).

The active site involves histidine 51.

It belongs to the thioester dehydratase family. FabZ subfamily.

The protein localises to the cytoplasm. It catalyses the reaction a (3R)-hydroxyacyl-[ACP] = a (2E)-enoyl-[ACP] + H2O. In terms of biological role, involved in unsaturated fatty acids biosynthesis. Catalyzes the dehydration of short chain beta-hydroxyacyl-ACPs and long chain saturated and unsaturated beta-hydroxyacyl-ACPs. This Geobacter sulfurreducens (strain ATCC 51573 / DSM 12127 / PCA) protein is 3-hydroxyacyl-[acyl-carrier-protein] dehydratase FabZ.